A 486-amino-acid polypeptide reads, in one-letter code: Protein nucleotidyltransferase YdiU (486 aa).

8 residues coordinate ATP: G90, G92, R93, K113, D125, G126, R176, and R183. Residue D252 is the Proton acceptor of the active site. Mg(2+)-binding residues include N253 and D262. D262 is a binding site for ATP.

It belongs to the SELO family. Mg(2+) is required as a cofactor. Requires Mn(2+) as cofactor.

The enzyme catalyses L-seryl-[protein] + ATP = 3-O-(5'-adenylyl)-L-seryl-[protein] + diphosphate. It carries out the reaction L-threonyl-[protein] + ATP = 3-O-(5'-adenylyl)-L-threonyl-[protein] + diphosphate. The catalysed reaction is L-tyrosyl-[protein] + ATP = O-(5'-adenylyl)-L-tyrosyl-[protein] + diphosphate. It catalyses the reaction L-histidyl-[protein] + UTP = N(tele)-(5'-uridylyl)-L-histidyl-[protein] + diphosphate. The enzyme catalyses L-seryl-[protein] + UTP = O-(5'-uridylyl)-L-seryl-[protein] + diphosphate. It carries out the reaction L-tyrosyl-[protein] + UTP = O-(5'-uridylyl)-L-tyrosyl-[protein] + diphosphate. Functionally, nucleotidyltransferase involved in the post-translational modification of proteins. It can catalyze the addition of adenosine monophosphate (AMP) or uridine monophosphate (UMP) to a protein, resulting in modifications known as AMPylation and UMPylation. The protein is Protein nucleotidyltransferase YdiU of Pseudomonas aeruginosa (strain LESB58).